We begin with the raw amino-acid sequence, 75 residues long: UPF0352 protein YPTB1297 (75 aa).

Belongs to the UPF0352 family.

In Yersinia pseudotuberculosis serotype I (strain IP32953), this protein is UPF0352 protein YPTB1297.